A 536-amino-acid polypeptide reads, in one-letter code: Thiamine transport system permease protein ThiP (536 aa).

12 helical membrane passes run 16–36 (GLCAAALMITVSLAAFLALWL), 58–78 (FSFWQAFLSAVLSVVPAVFLA), 95–115 (LCAMTLILPVLVAVFGILSVY), 134–154 (FSPYGLQGILLAHVFFNLPMA), 199–219 (VAALIFMLCFASFATVLSLGG), 240–260 (PARAAMLALIQMVCCLALVLL), 291–311 (DALLIVLALLLLLPPLVAVVV), 334–354 (SLRIALAAGVLCVVLTMMLLW), 373–393 (LSGMLILAMPGIVLATGFFLL), 404–424 (ADGIVIFTNALMAIPYALKVL), 463–483 (AQALAFACVLSIGDFGVVALF), and 506–526 (DGAVTALILLLLCFTLFTLIE). Residues 56-261 (VRFSFWQAFL…VCCLALVLLS (206 aa)) form the ABC transmembrane type-1 1 domain. Residues 331–525 (VWTSLRIALA…LLCFTLFTLI (195 aa)) form the ABC transmembrane type-1 2 domain.

Belongs to the binding-protein-dependent transport system permease family. In terms of assembly, the complex is composed of two ATP-binding proteins (ThiQ), two transmembrane proteins (ThiP) and a solute-binding protein (ThiB).

The protein localises to the cell inner membrane. Its function is as follows. Part of the ABC transporter complex ThiBPQ involved in thiamine import. Probably responsible for the translocation of the substrate across the membrane. Is also involved in thiamine pyrophosphate transport. In Salmonella typhimurium (strain LT2 / SGSC1412 / ATCC 700720), this protein is Thiamine transport system permease protein ThiP.